The chain runs to 338 residues: Anthranilate phosphoribosyltransferase (338 aa).

Residues Gly-81, 84–85 (GD), Thr-89, 91–94 (NIST), 109–117 (KHGNRALSS), and Ala-121 contribute to the 5-phospho-alpha-D-ribose 1-diphosphate site. Gly-81 contributes to the anthranilate binding site. Mg(2+) is bound at residue Ser-93. Asn-112 contributes to the anthranilate binding site. Arg-167 is a binding site for anthranilate. Asp-225 and Glu-226 together coordinate Mg(2+).

This sequence belongs to the anthranilate phosphoribosyltransferase family. As to quaternary structure, homodimer. The cofactor is Mg(2+).

The catalysed reaction is N-(5-phospho-beta-D-ribosyl)anthranilate + diphosphate = 5-phospho-alpha-D-ribose 1-diphosphate + anthranilate. Its pathway is amino-acid biosynthesis; L-tryptophan biosynthesis; L-tryptophan from chorismate: step 2/5. Its function is as follows. Catalyzes the transfer of the phosphoribosyl group of 5-phosphorylribose-1-pyrophosphate (PRPP) to anthranilate to yield N-(5'-phosphoribosyl)-anthranilate (PRA). This Rhizobium etli (strain ATCC 51251 / DSM 11541 / JCM 21823 / NBRC 15573 / CFN 42) protein is Anthranilate phosphoribosyltransferase.